A 156-amino-acid polypeptide reads, in one-letter code: Acyl carrier protein, mitochondrial (156 aa).

The N-terminal 68 residues, 1–68, are a transit peptide targeting the mitochondrion; it reads MASRVLSAYV…GRVTQLCRQY (68 aa). The Carrier domain maps to 77–152; the sequence is EGIQDRVLYV…EIVDYIADKK (76 aa). Residue Lys-88 is modified to N6-acetyllysine. Ser-112 is subject to O-(pantetheine 4'-phosphoryl)serine.

Belongs to the acyl carrier protein (ACP) family. In terms of assembly, mammalian complex I is composed of 45 different subunits. Interacts with ETFRF1. Identified in a complex composed of MALSU1, MIEF1 upstream open reading frame protein and NDUFAB1; within the trimeric complex, MIEF1 upstream open reading frame protein functions as a bridging scaffold that interacts with MALSU1 on one side, and with NDUFAB1 on the other side. The complex interacts with the mitochondrial large ribosomal subunit. Interacts with alpha-1-microglobulin chain; this interaction is required for the maintenance of mitochondrial redox homeostasis. Component of the mitochondrial core iron-sulfur cluster (ISC) complex composed of NFS1, LYRM4, NDUFAB1, ISCU, FXN, and FDX2; this complex is a heterohexamer containing two copies of each monomer. Component of the cyteine desulfurase complex composed of NFS1, LYRM4 and NDUFAB1; this complex contributes to the stability and cysteine desulfurase activity of NFS1. Phosphopantetheinylation at Ser-112 is essential for interactions with LYR motif-containing proteins.

It localises to the mitochondrion. Its function is as follows. Carrier of the growing fatty acid chain in fatty acid biosynthesis. Accessory and non-catalytic subunit of the mitochondrial membrane respiratory chain NADH dehydrogenase (Complex I), which functions in the transfer of electrons from NADH to the respiratory chain. Accessory protein, of the core iron-sulfur cluster (ISC) assembly complex, that regulates, in association with LYRM4, the stability and the cysteine desulfurase activity of NFS1 and participates in the [2Fe-2S] clusters assembly on the scaffolding protein ISCU. The core iron-sulfur cluster (ISC) assembly complex is involved in the de novo synthesis of a [2Fe-2S] cluster, the first step of the mitochondrial iron-sulfur protein biogenesis. This process is initiated by the cysteine desulfurase complex (NFS1:LYRM4:NDUFAB1) that produces persulfide which is delivered on the scaffold protein ISCU in a FXN-dependent manner. Then this complex is stabilized by FDX2 which provides reducing equivalents to accomplish the [2Fe-2S] cluster assembly. Finally, the [2Fe-2S] cluster is transferred from ISCU to chaperone proteins, including HSCB, HSPA9 and GLRX5. The polypeptide is Acyl carrier protein, mitochondrial (Pongo pygmaeus (Bornean orangutan)).